Here is a 388-residue protein sequence, read N- to C-terminus: Cystathionine gamma-synthase (388 aa).

At Lys-208 the chain carries N6-(pyridoxal phosphate)lysine.

Belongs to the trans-sulfuration enzymes family. Homotetramer. The cofactor is pyridoxal 5'-phosphate.

It localises to the cytoplasm. It carries out the reaction O-succinyl-L-homoserine + L-cysteine = L,L-cystathionine + succinate + H(+). Catalyzes the formation of L-cystathionine from O-succinyl-L-homoserine (OSHS) and L-cysteine, via a gamma-replacement reaction. In the absence of thiol, catalyzes gamma-elimination to form 2-oxobutanoate, succinate and ammonia. This is Cystathionine gamma-synthase (metB) from Mycobacterium leprae (strain TN).